The following is a 120-amino-acid chain: Small ribosomal subunit protein bS6 (120 aa).

Positions 97–112 (SNEPSPILKNQSTENT) are enriched in polar residues. The tract at residues 97-120 (SNEPSPILKNQSTENTPVIDVTAN) is disordered.

It belongs to the bacterial ribosomal protein bS6 family.

Its function is as follows. Binds together with bS18 to 16S ribosomal RNA. This Rickettsia bellii (strain OSU 85-389) protein is Small ribosomal subunit protein bS6.